Here is a 305-residue protein sequence, read N- to C-terminus: tRNA dimethylallyltransferase (305 aa).

12 to 19 is an ATP binding site; sequence GPTASGKT. 14–19 is a binding site for substrate; sequence TASGKT. Interaction with substrate tRNA stretches follow at residues 37 to 40, 161 to 165, and 242 to 247; these read DSAL, QRLAR, and RCVGYR.

Belongs to the IPP transferase family. As to quaternary structure, monomer. The cofactor is Mg(2+).

The enzyme catalyses adenosine(37) in tRNA + dimethylallyl diphosphate = N(6)-dimethylallyladenosine(37) in tRNA + diphosphate. Functionally, catalyzes the transfer of a dimethylallyl group onto the adenine at position 37 in tRNAs that read codons beginning with uridine, leading to the formation of N6-(dimethylallyl)adenosine (i(6)A). The chain is tRNA dimethylallyltransferase from Psychromonas ingrahamii (strain DSM 17664 / CCUG 51855 / 37).